The following is a 333-amino-acid chain: uncharacterized protein (333 aa).

This sequence belongs to the polysaccharide synthase family.

This is an uncharacterized protein from Methanocaldococcus jannaschii (strain ATCC 43067 / DSM 2661 / JAL-1 / JCM 10045 / NBRC 100440) (Methanococcus jannaschii).